Consider the following 93-residue polypeptide: Alpha-defensin 3 (93 aa).

The signal sequence occupies residues 1–16 (MKTLVLLSALVLLAFQ). Positions 17–58 (VQADPIQNTDEETKTEEQPGEDDQAVSVSFGDPEGSSLQEES) are excised as a propeptide. The segment at 22–56 (IQNTDEETKTEEQPGEDDQAVSVSFGDPEGSSLQE) is disordered. 3 disulfide bridges follow: Cys64/Cys92, Cys66/Cys81, and Cys71/Cys91.

This sequence belongs to the alpha-defensin family. Paneth cells of the small bowel.

Its subcellular location is the secreted. Functionally, probably contributes to the antimicrobial barrier function of the small bowel mucosa. The protein is Alpha-defensin 3 (Defa3) of Mus musculus (Mouse).